A 493-amino-acid polypeptide reads, in one-letter code: Galactose-1-phosphate uridylyltransferase (493 aa).

Belongs to the galactose-1-phosphate uridylyltransferase type 2 family.

The protein localises to the cytoplasm. The catalysed reaction is alpha-D-galactose 1-phosphate + UDP-alpha-D-glucose = alpha-D-glucose 1-phosphate + UDP-alpha-D-galactose. It functions in the pathway carbohydrate metabolism; galactose metabolism. The sequence is that of Galactose-1-phosphate uridylyltransferase from Streptococcus pneumoniae (strain Hungary19A-6).